A 302-amino-acid polypeptide reads, in one-letter code: Glutaminase (302 aa).

Residues serine 61, asparagine 111, glutamate 155, asparagine 162, tyrosine 186, tyrosine 238, and valine 256 each coordinate substrate.

The protein belongs to the glutaminase family. Homotetramer.

The catalysed reaction is L-glutamine + H2O = L-glutamate + NH4(+). The sequence is that of Glutaminase from Ectopseudomonas mendocina (strain ymp) (Pseudomonas mendocina).